We begin with the raw amino-acid sequence, 100 residues long: Small ribosomal subunit protein uS14 (100 aa).

This sequence belongs to the universal ribosomal protein uS14 family. As to quaternary structure, part of the 30S ribosomal subunit. Contacts proteins S3 and S10.

In terms of biological role, binds 16S rRNA, required for the assembly of 30S particles and may also be responsible for determining the conformation of the 16S rRNA at the A site. The protein is Small ribosomal subunit protein uS14 of Prochlorococcus marinus (strain NATL2A).